We begin with the raw amino-acid sequence, 67 residues long: Cold shock protein (67 aa).

The region spanning 4-64 (GTVKWFNAEK…GAKGPQATGV (61 aa)) is the CSD domain.

It is found in the cytoplasm. The protein is Cold shock protein (csp) of Arthrobacter globiformis.